The sequence spans 344 residues: MWESICLTLAATAGNNIGKVLQKKGTIILPPLSLKLKVLRAYAENKPWALGFLMDIVGALLMLRALSLAPVSVVQPVSGCGLAILSVFSHFYLKEVMNVFDWIGITVAGIGTIGVGAGGEEQEASLISVFQLLWLALVVAILFVLLNAWLHIFKRQRREQELGEYEVVEEIIYGLESGILFGMASVVSKMGFVFVEQGFSTMFIPMCISISICCSGTGFFYQTRGLKHGRAIVVSTCAAVASIVTGVVAGMFALGEKLPTSPSGRLLLLLGWLLIMLGVVLLVTSSRLIRHLPRSFRRSRQTSLERGFNIRRTTSHTPKDTNPSAVIQAATLHHLLSSPSKDKD.

The Cytoplasmic portion of the chain corresponds to 1 to 46; it reads MWESICLTLAATAGNNIGKVLQKKGTIILPPLSLKLKVLRAYAENK. 2 consecutive transmembrane segments (helical) span residues 47-67 and 68-88; these read PWAL…RALS and LAPV…LSVF. Over 89 to 98 the chain is Cytoplasmic; it reads SHFYLKEVMN. Residues 99–119 traverse the membrane as a helical segment; the sequence is VFDWIGITVAGIGTIGVGAGG. Residues 120–125 are Extracellular-facing; it reads EEQEAS. A helical transmembrane segment spans residues 126 to 146; sequence LISVFQLLWLALVVAILFVLL. Topologically, residues 147–166 are cytoplasmic; the sequence is NAWLHIFKRQRREQELGEYE. Residues 167-187 traverse the membrane as a helical segment; it reads VVEEIIYGLESGILFGMASVV. The Extracellular portion of the chain corresponds to 188-191; the sequence is SKMG. A helical membrane pass occupies residues 192-212; it reads FVFVEQGFSTMFIPMCISISI. Residues 213 to 231 are Cytoplasmic-facing; the sequence is CCSGTGFFYQTRGLKHGRA. A helical membrane pass occupies residues 232-252; sequence IVVSTCAAVASIVTGVVAGMF. At 253 to 265 the chain is on the extracellular side; it reads ALGEKLPTSPSGR. Residues 266 to 286 traverse the membrane as a helical segment; it reads LLLLLGWLLIMLGVVLLVTSS. Residues 287–344 are Cytoplasmic-facing; the sequence is RLIRHLPRSFRRSRQTSLERGFNIRRTTSHTPKDTNPSAVIQAATLHHLLSSPSKDKD.

The protein belongs to the NIPA (TC 2.A.7) family. As to quaternary structure, homodimer.

It is found in the cell membrane. Its subcellular location is the early endosome. Functionally, acts as a Mg(2+) transporter. Can also transport other divalent cations such as Fe(2+), Sr(2+), Ba(2+), Mn(2+) and Co(2+) but to a much less extent than Mg(2+). The sequence is that of Probable magnesium transporter NIPA9 from Arabidopsis thaliana (Mouse-ear cress).